A 284-amino-acid chain; its full sequence is MGQKHGVDTRGKGAEFCGCWEILTEFINGSSASFDDLPDDCLAIISSFTSTPRDAFLAALVSKSFGLQFNSDSVWEKFLPPPDYVSLLPKSRVFSSKKELYFALCDPFPNHNGKMSFRLDKASGKKCVMLSAKKLLISRVVNPKYWKWISIPESRFDEVPELLNIDSFDIRGVLNTRIISPGTHYSAYIVYTKTSHFNGFQTSPIQAGVGFQRHGMSKTFIRFDSKKRQDGWMEAKIGDFYNEGGLIGFNLIEVSVVDVARYPHMNMKSGLIIEGIEFRPKDSR.

An F-box domain is found at 32-80 (ASFDDLPDDCLAIISSFTSTPRDAFLAALVSKSFGLQFNSDSVWEKFLP).

This is F-box protein PP2-B5 (PP2B5) from Arabidopsis thaliana (Mouse-ear cress).